A 434-amino-acid polypeptide reads, in one-letter code: Ribosomal protein uS12 methylthiotransferase RimO (434 aa).

Residues 4 to 122 enclose the MTTase N-terminal domain; that stretch reads NRVDVITLGC…LISHLGKSYY (119 aa). Cys13, Cys51, Cys85, Cys146, Cys150, and Cys153 together coordinate [4Fe-4S] cluster. Residues 132–363 enclose the Radical SAM core domain; sequence TTPRHYAYLK…MAVQERISAA (232 aa). Residues 366–434 enclose the TRAM domain; the sequence is EAKIGSRLHV…PFDLYARIVD (69 aa).

Belongs to the methylthiotransferase family. RimO subfamily. The cofactor is [4Fe-4S] cluster.

The protein localises to the cytoplasm. The catalysed reaction is L-aspartate(89)-[ribosomal protein uS12]-hydrogen + (sulfur carrier)-SH + AH2 + 2 S-adenosyl-L-methionine = 3-methylsulfanyl-L-aspartate(89)-[ribosomal protein uS12]-hydrogen + (sulfur carrier)-H + 5'-deoxyadenosine + L-methionine + A + S-adenosyl-L-homocysteine + 2 H(+). Its function is as follows. Catalyzes the methylthiolation of an aspartic acid residue of ribosomal protein uS12. The chain is Ribosomal protein uS12 methylthiotransferase RimO from Porphyromonas gingivalis (strain ATCC BAA-308 / W83).